A 245-amino-acid chain; its full sequence is 14-3-3 protein zeta/delta (245 aa).

N-acetylmethionine is present on Met-1. Lys-3 carries the post-translational modification N6-acetyllysine. Ser-58 carries the post-translational modification Phosphoserine; by PKA. N6-acetyllysine is present on Lys-68. 3 positions are modified to phosphoserine: Ser-184, Ser-207, and Ser-210. Thr-232 carries the post-translational modification Phosphothreonine; by CK1.

It belongs to the 14-3-3 family. Homodimer. Heterodimerizes with YWHAE. Homo- and heterodimerization is inhibited by phosphorylation on Ser-58. Interacts with FOXO4, NOXA1, SSH1 and ARHGEF2. Interacts with CDK16 and with WEE1 (C-terminal). Interacts with MLF1 (phosphorylated form); the interaction retains it in the cytoplasm. Interacts with BSPRY. Interacts with Thr-phosphorylated ITGB2. Interacts with Pseudomonas aeruginosa exoS (unphosphorylated form). Interacts with BAX; the interaction occurs in the cytoplasm. Under stress conditions, MAPK8-mediated phosphorylation releases BAX to mitochondria. Interacts with phosphorylated RAF1; the interaction is inhibited when YWHAZ is phosphorylated on Thr-232. Interacts with TP53; the interaction enhances p53 transcriptional activity. The Ser-58 phosphorylated form inhibits this interaction and p53 transcriptional activity. Interacts with ABL1 (phosphorylated form); the interaction retains ABL1 in the cytoplasm. Interacts with PKA-phosphorylated AANAT; the interaction modulates AANAT enzymatic activity by increasing affinity for arylalkylamines and acetyl-CoA and protecting the enzyme from dephosphorylation and proteasomal degradation. It may also prevent thiol-dependent inactivation. Interacts with AKT1; the interaction phosphorylates YWHAZ and modulates dimerization. Interacts with GAB2. Interacts with SAMSN1. Interacts with BCL2L11 and TLK2. Interacts with the 'Thr-369' phosphorylated form of DAPK2. Interacts with PI4KB, TBC1D22A and TBC1D22B. Interacts with ZFP36L1 (via phosphorylated form); this interaction occurs in a p38 MAPK- and AKT-signaling pathways. Interacts with SLITRK1. Interacts with AK5, LDB1, MADD, PDE1A and SMARCB1. Interacts with ARHGEF7 and GIT1. Interacts with MEFV. Interacts with ADAM22 (via C-terminus). In terms of processing, the delta, brain-specific form differs from the zeta form in being phosphorylated. Phosphorylation on Ser-184 by MAPK8; promotes dissociation of BAX and translocation of BAX to mitochondria. Phosphorylation on Thr-232; inhibits binding of RAF1. Phosphorylated on Ser-58 by PKA and protein kinase C delta type catalytic subunit in a sphingosine-dependent fashion. Phosphorylation on Ser-58 by PKA; disrupts homodimerization and heterodimerization with YHAE and TP53.

The protein localises to the cytoplasm. Its subcellular location is the melanosome. Functionally, adapter protein implicated in the regulation of a large spectrum of both general and specialized signaling pathways. Binds to a large number of partners, usually by recognition of a phosphoserine or phosphothreonine motif. Binding generally results in the modulation of the activity of the binding partner. Promotes cytosolic retention and inactivation of TFEB transcription factor by binding to phosphorylated TFEB. Induces ARHGEF7 activity on RAC1 as well as lamellipodia and membrane ruffle formation. In neurons, regulates spine maturation through the modulation of ARHGEF7 activity. The protein is 14-3-3 protein zeta/delta (Ywhaz) of Mus musculus (Mouse).